The sequence spans 345 residues: UDP-3-O-acylglucosamine N-acyltransferase (345 aa).

His-241 functions as the Proton acceptor in the catalytic mechanism.

Belongs to the transferase hexapeptide repeat family. LpxD subfamily. Homotrimer.

It carries out the reaction a UDP-3-O-[(3R)-3-hydroxyacyl]-alpha-D-glucosamine + a (3R)-hydroxyacyl-[ACP] = a UDP-2-N,3-O-bis[(3R)-3-hydroxyacyl]-alpha-D-glucosamine + holo-[ACP] + H(+). The protein operates within bacterial outer membrane biogenesis; LPS lipid A biosynthesis. Functionally, catalyzes the N-acylation of UDP-3-O-acylglucosamine using 3-hydroxyacyl-ACP as the acyl donor. Is involved in the biosynthesis of lipid A, a phosphorylated glycolipid that anchors the lipopolysaccharide to the outer membrane of the cell. The sequence is that of UDP-3-O-acylglucosamine N-acyltransferase from Desulfotalea psychrophila (strain LSv54 / DSM 12343).